The following is a 385-amino-acid chain: Zinc cluster transcription factor CZF1 (385 aa).

Over residues 1–19 the composition is skewed to polar residues; sequence MSSIPNINWNDPNNGKSNT. 3 disordered regions span residues 1–117, 154–216, and 233–308; these read MSSI…QQPL, LQQR…QQWD, and SSIQ…KPIT. Low complexity predominate over residues 20–38; sequence SRQSQPQPQLPSNVSPPNS. 2 stretches are compositionally biased toward polar residues: residues 52–67 and 88–97; these read YGSS…NPNT and YPVQQTAQQR. Composition is skewed to low complexity over residues 102–117 and 154–169; these read LQQV…QQPL and LQQR…KSQL. Positions 170–200 are enriched in polar residues; the sequence is NEQNAMMSASTQQYPVQDFTNPYPNAQNPAE. Composition is skewed to low complexity over residues 201–214 and 233–256; these read QQQQ…QSQQ and SSIQ…KQQQ. Over residues 265 to 275 the composition is skewed to basic residues; that stretch reads KKKPGRKPKLR. Residues 279-291 show a composition bias toward polar residues; it reads ESSSETPQVPKTA. The zn(2)-C6 fungal-type DNA-binding region spans 315–342; it reads CLTCRQRKKRCCETRPRCTECTRLRLNC. The disordered stretch occupies residues 345–364; sequence PKPGTEHKNKPKDQKDDENT. The segment covering 348-364 has biased composition (basic and acidic residues); the sequence is GTEHKNKPKDQKDDENT.

Interacts with EFG1.

It localises to the nucleus. Functionally, transcriptional regulator of the switch between 2 heritable states, the white and opaque states. These 2 cell types differ in many characteristics, including cell structure, mating competence, and virulence. Each state is heritable for many generations, and switching between states occurs stochastically, at low frequency. Contributes to formation of the opaque state, but is not necessary for heritability of the opaque state. Plays a role in cell adhesion and pseudohyphal growth. Involved in acquisition of drug resistance and acts as a repressor of beta-glucan synthesis, thus negatively regulating cell wall integrity. Plays a role in adherence, invasion and damage to oral epithelial cells. This is Zinc cluster transcription factor CZF1 (CZF1) from Candida albicans (strain SC5314 / ATCC MYA-2876) (Yeast).